Consider the following 146-residue polypeptide: Single-stranded DNA-binding protein, mitochondrial (146 aa).

A mitochondrion-targeting transit peptide spans 1 to 22; that stretch reads MQHTRRMLNPLLTGLRNLPARG. An SSB domain is found at 38–142; the sequence is VNTVTILGRV…IIADDVLFFR (105 aa).

As to quaternary structure, homotetramer. Uniformly distributed in the early embryo. High levels detected in the anterior and posterior midgut primordia of stage 12 embryos. In larvae, high levels were detected in proliferating tissues including the CNS and digestive tract. In adults, highly expressed in the CNS, digestive tract and ovary.

It is found in the mitochondrion. Binds preferentially and cooperatively to pyrimidine rich single-stranded DNA (ss-DNA). Required to maintain the copy number of mitochondrial DNA (mtDNA) and plays crucial roles during mtDNA replication that stimulate activity of the gamma complex polymerase PolG1/tam at the replication fork. Promotes PolG1 activity largely by organizing the template DNA and eliminating secondary structures to favor ss-DNA conformations that facilitate PolG1 activity. This chain is Single-stranded DNA-binding protein, mitochondrial (mtSSB), found in Drosophila melanogaster (Fruit fly).